A 101-amino-acid polypeptide reads, in one-letter code: Large ribosomal subunit protein bL28 (101 aa).

The protein belongs to the bacterial ribosomal protein bL28 family.

In Rhodopseudomonas palustris (strain BisA53), this protein is Large ribosomal subunit protein bL28.